A 306-amino-acid chain; its full sequence is Glutaminase (306 aa).

Residues S62, N114, E159, N166, Y190, Y242, and V260 each coordinate substrate.

It belongs to the glutaminase family. Homotetramer.

It carries out the reaction L-glutamine + H2O = L-glutamate + NH4(+). This is Glutaminase from Clostridium tetani (strain Massachusetts / E88).